A 156-amino-acid chain; its full sequence is Small ribosomal subunit protein uS7 (156 aa).

It belongs to the universal ribosomal protein uS7 family. In terms of assembly, part of the 30S ribosomal subunit. Contacts proteins S9 and S11.

In terms of biological role, one of the primary rRNA binding proteins, it binds directly to 16S rRNA where it nucleates assembly of the head domain of the 30S subunit. Is located at the subunit interface close to the decoding center, probably blocks exit of the E-site tRNA. The polypeptide is Small ribosomal subunit protein uS7 (Rippkaea orientalis (strain PCC 8801 / RF-1) (Cyanothece sp. (strain PCC 8801))).